The sequence spans 54 residues: Light-harvesting protein B-800/850 alpha chain (54 aa).

The Cytoplasmic segment spans residues 1-14; that stretch reads MTNGKIWLVVKPTV. The chain crosses the membrane as a helical span at residues 15–35; sequence GVPLFLSAAVIASVVIHAAVL. Position 31 (His31) interacts with a bacteriochlorophyll. Over 36–54 the chain is Periplasmic; sequence TTTTWLPAYYQGSAAVAAE.

Belongs to the antenna complex alpha subunit family. In terms of assembly, the core complex is formed by different alpha and beta chains, binding bacteriochlorophyll molecules, and arranged most probably in tetrameric structures disposed around the reaction center. The non-pigmented gamma chains may constitute additional components.

It localises to the cell inner membrane. Functionally, antenna complexes are light-harvesting systems, which transfer the excitation energy to the reaction centers. This Cereibacter sphaeroides (Rhodobacter sphaeroides) protein is Light-harvesting protein B-800/850 alpha chain (pucA).